The following is a 239-amino-acid chain: Pyridoxine 5'-phosphate synthase (239 aa).

N7 serves as a coordination point for 3-amino-2-oxopropyl phosphate. Position 9 to 10 (D9 to H10) interacts with 1-deoxy-D-xylulose 5-phosphate. Position 18 (R18) interacts with 3-amino-2-oxopropyl phosphate. The active-site Proton acceptor is H43. 2 residues coordinate 1-deoxy-D-xylulose 5-phosphate: R45 and H50. E70 serves as the catalytic Proton acceptor. Residue T100 participates in 1-deoxy-D-xylulose 5-phosphate binding. Catalysis depends on H191, which acts as the Proton donor. Residues G192 and G213–H214 contribute to the 3-amino-2-oxopropyl phosphate site.

Belongs to the PNP synthase family. Homooctamer; tetramer of dimers.

It localises to the cytoplasm. The enzyme catalyses 3-amino-2-oxopropyl phosphate + 1-deoxy-D-xylulose 5-phosphate = pyridoxine 5'-phosphate + phosphate + 2 H2O + H(+). It functions in the pathway cofactor biosynthesis; pyridoxine 5'-phosphate biosynthesis; pyridoxine 5'-phosphate from D-erythrose 4-phosphate: step 5/5. Functionally, catalyzes the complicated ring closure reaction between the two acyclic compounds 1-deoxy-D-xylulose-5-phosphate (DXP) and 3-amino-2-oxopropyl phosphate (1-amino-acetone-3-phosphate or AAP) to form pyridoxine 5'-phosphate (PNP) and inorganic phosphate. This Synechococcus sp. (strain JA-2-3B'a(2-13)) (Cyanobacteria bacterium Yellowstone B-Prime) protein is Pyridoxine 5'-phosphate synthase.